A 213-amino-acid chain; its full sequence is Ribosomal RNA small subunit methyltransferase G (213 aa).

Residues Gly-83, Leu-88, 132–133 (IE), and Arg-146 each bind S-adenosyl-L-methionine.

The protein belongs to the methyltransferase superfamily. RNA methyltransferase RsmG family.

The protein localises to the cytoplasm. The enzyme catalyses guanosine(527) in 16S rRNA + S-adenosyl-L-methionine = N(7)-methylguanosine(527) in 16S rRNA + S-adenosyl-L-homocysteine. Specifically methylates the N7 position of guanine in position 527 of 16S rRNA. In Granulibacter bethesdensis (strain ATCC BAA-1260 / CGDNIH1), this protein is Ribosomal RNA small subunit methyltransferase G.